The chain runs to 388 residues: GDP-4-keto-6-deoxy-D-mannose 3-dehydratase (388 aa).

26–29 (KMFT) is a binding site for GDP-4-dehydro-alpha-D-rhamnose. The chain crosses the membrane as a helical span at residues 49-69 (YAVMVSSGSTANLLMIAALFF). Pyridoxal 5'-phosphate contacts are provided by residues 56–57 (GS), W88, E162, and S183. H188 (proton donor/acceptor) is an active-site residue. Residue H215 coordinates L-glutamate. R219 is a binding site for GDP-4-dehydro-alpha-D-rhamnose. Pyridoxal 5'-phosphate is bound at residue N248. R250 is a binding site for L-glutamate. E329 contacts GDP-4-dehydro-alpha-D-rhamnose.

Belongs to the DegT/DnrJ/EryC1 family. Homodimer. The cofactor is pyridoxal 5'-phosphate.

Its subcellular location is the cell membrane. It carries out the reaction GDP-4-dehydro-alpha-D-rhamnose + L-glutamate = GDP-4-dehydro-3,6-dideoxy-alpha-D-mannose + 2-oxoglutarate + NH4(+). It functions in the pathway nucleotide-sugar metabolism; GDP-L-colitose biosynthesis. Functionally, involved in the biosynthesis of L-colitose, a 3,6-dideoxyhexose present in the O-antigen region of lipopolysaccharides (LPS), where it serves as an antigenic determinant and is vital for bacterial defense and survival. Catalyzes the removal of the C3'-hydroxyl group from GDP-4-keto-6-deoxy-D-mannose via a combined transamination-deoxygenation reaction. The catalysis is initiated by a transamination step in which pyridoxal 5'-phosphate (PLP) is converted to pyridoxamine 5'-phosphate (PMP) in the presence of L-glutamate. This coenzyme then forms a Schiff base with GDP-4-keto-6-deoxy-D-mannose and the resulting adduct undergoes a PMP-mediated beta-dehydration reaction to give a sugar enamine intermediate, which after tautomerization and hydrolysis to release ammonia yields GDP-4-keto-3,6-dideoxy-D-mannose as a product. In vitro, is able to catalyze the formation of GDP-4-keto-3,6-dideoxymannose using GDP-perosamine rather than GDP-4-keto-6-deoxymannose as a substrate, with no need of glutamate. The sequence is that of GDP-4-keto-6-deoxy-D-mannose 3-dehydratase from Escherichia coli O55:H7 (strain CB9615 / EPEC).